Here is a 426-residue protein sequence, read N- to C-terminus: Aspartate aminotransferase, mitochondrial (426 aa).

The N-terminal 29 residues, 1 to 29 (MIRSARLISNIKFGQKNIRQFSTNTNWWA), are a transit peptide targeting the mitochondrion. Substrate-binding residues include Gly60, Trp156, and Asn209. Lys273 is modified (N6-(pyridoxal phosphate)lysine). Arg401 contacts substrate.

It belongs to the class-I pyridoxal-phosphate-dependent aminotransferase family. In terms of assembly, homodimer. Requires pyridoxal 5'-phosphate as cofactor.

Its subcellular location is the mitochondrion matrix. It localises to the cell membrane. It carries out the reaction L-aspartate + 2-oxoglutarate = oxaloacetate + L-glutamate. It catalyses the reaction L-kynurenine + 2-oxoglutarate = kynurenate + L-glutamate + H2O. In terms of biological role, plays a key role in amino acid metabolism. Important for metabolite exchange between mitochondria and cytosol. The protein is Aspartate aminotransferase, mitochondrial (aatA) of Dictyostelium discoideum (Social amoeba).